Consider the following 385-residue polypeptide: Probable tRNA sulfurtransferase (385 aa).

The 105-residue stretch at 57–161 (NESIKRLSNV…NKNAYVWSNK (105 aa)) folds into the THUMP domain. Residues 181–182 (ML), 206–207 (YY), arginine 263, glycine 285, and glutamine 294 contribute to the ATP site.

The protein belongs to the ThiI family.

The protein resides in the cytoplasm. The enzyme catalyses [ThiI sulfur-carrier protein]-S-sulfanyl-L-cysteine + a uridine in tRNA + 2 reduced [2Fe-2S]-[ferredoxin] + ATP + H(+) = [ThiI sulfur-carrier protein]-L-cysteine + a 4-thiouridine in tRNA + 2 oxidized [2Fe-2S]-[ferredoxin] + AMP + diphosphate. It carries out the reaction [ThiS sulfur-carrier protein]-C-terminal Gly-Gly-AMP + S-sulfanyl-L-cysteinyl-[cysteine desulfurase] + AH2 = [ThiS sulfur-carrier protein]-C-terminal-Gly-aminoethanethioate + L-cysteinyl-[cysteine desulfurase] + A + AMP + 2 H(+). It participates in cofactor biosynthesis; thiamine diphosphate biosynthesis. Its function is as follows. Catalyzes the ATP-dependent transfer of a sulfur to tRNA to produce 4-thiouridine in position 8 of tRNAs, which functions as a near-UV photosensor. Also catalyzes the transfer of sulfur to the sulfur carrier protein ThiS, forming ThiS-thiocarboxylate. This is a step in the synthesis of thiazole, in the thiamine biosynthesis pathway. The sulfur is donated as persulfide by IscS. The sequence is that of Probable tRNA sulfurtransferase from Clostridium botulinum (strain Alaska E43 / Type E3).